The sequence spans 27 residues: Secretin (27 aa).

Methionine 27 bears the Methionine amide mark.

It belongs to the glucagon family.

The protein localises to the secreted. Functionally, hormone involved in different processes, such as regulation of the pH of the duodenal content, food intake and water homeostasis. Exerts its biological effects by binding to secretin receptor (SCTR), a G-protein coupled receptor expressed in the basolateral domain of several cells. This is Secretin from Gallus gallus (Chicken).